Here is a 71-residue protein sequence, read N- to C-terminus: Defensin-like protein 292 (71 aa).

3 disulfides stabilise this stretch: Cys-44-Cys-64, Cys-50-Cys-69, and Cys-56-Cys-71.

It belongs to the DEFL family.

The chain is Defensin-like protein 292 from Arabidopsis thaliana (Mouse-ear cress).